The following is a 106-amino-acid chain: Small ribosomal subunit protein uS10 (106 aa).

This sequence belongs to the universal ribosomal protein uS10 family. As to quaternary structure, part of the 30S ribosomal subunit.

Involved in the binding of tRNA to the ribosomes. This is Small ribosomal subunit protein uS10 from Pyrobaculum neutrophilum (strain DSM 2338 / JCM 9278 / NBRC 100436 / V24Sta) (Thermoproteus neutrophilus).